Consider the following 362-residue polypeptide: Phosphoserine aminotransferase (362 aa).

2 residues coordinate L-glutamate: S9 and R42. Pyridoxal 5'-phosphate is bound by residues 76–77 (GR), W102, T153, D174, and Q197. K198 bears the N6-(pyridoxal phosphate)lysine mark. 239 to 240 (NT) is a pyridoxal 5'-phosphate binding site.

This sequence belongs to the class-V pyridoxal-phosphate-dependent aminotransferase family. SerC subfamily. Homodimer. The cofactor is pyridoxal 5'-phosphate.

The protein localises to the cytoplasm. The catalysed reaction is O-phospho-L-serine + 2-oxoglutarate = 3-phosphooxypyruvate + L-glutamate. It carries out the reaction 4-(phosphooxy)-L-threonine + 2-oxoglutarate = (R)-3-hydroxy-2-oxo-4-phosphooxybutanoate + L-glutamate. It participates in amino-acid biosynthesis; L-serine biosynthesis; L-serine from 3-phospho-D-glycerate: step 2/3. It functions in the pathway cofactor biosynthesis; pyridoxine 5'-phosphate biosynthesis; pyridoxine 5'-phosphate from D-erythrose 4-phosphate: step 3/5. Its function is as follows. Catalyzes the reversible conversion of 3-phosphohydroxypyruvate to phosphoserine and of 3-hydroxy-2-oxo-4-phosphonooxybutanoate to phosphohydroxythreonine. This Citrobacter koseri (strain ATCC BAA-895 / CDC 4225-83 / SGSC4696) protein is Phosphoserine aminotransferase.